A 1494-amino-acid chain; its full sequence is MYSEWRSLHLVIQNDQGHTSVLHSYPESVGREVANAVVRPLGQVLGTPSVAGSENLLKTDKEVKWTMEVICYGLTLPLDGETVKYCVDVYTDWIMALVLPKDSIPLPVIKEPNQYVQTILKHLQNLFVPRQEQGSSQIRLCLQVLRAIQKLARESSLMARETWEVLLLFLLQINDILLAPPTVQGGIAENLAEKLIGVLFEVWLLACTRCFPTPPYWKTAKEMVANWRHHPAVVEQWSKVICALTSRLLRFTYGPSFPAFKVPDEDASLIPPEMDNECVAQTWFRFLHMLSNPVDLSNPAIISSTPKFQEQFLNVSGMPQELNQYPCLKHLPQIFFRAMRGISCLVDAFLGISRPRSDSAPPTPVNRLSMPQSAAVSTTPPHNRRHRAVTVNKATMKTSTVSTAHASKVQHQTSSTSPLSSPNQTSSEPRPLPAPRRPKVNSILNLFGSWLFDAAFVHCKLHNGINRDSSMTAITTQASMEFRRKGSQMSTDTMVSNPMFDASEFPDNYEAGRAEACGTLCRIFCSKKTGEEILPAYLSRFYMLLIQGLQINDYVCHPVLASVILNSPPLFCCDLKGIDVVVPYFISALETILPDRELSKFKSYVNPTELRRSSINILLSLLPLPHHFGTVKSEVVLEGKFSNDDSSSYDKPITFLSLKLRLVNILIGALQTETDPNNTQMILGAMLNIVQDSALLEAIGCQMEMGGGENNLKSHSRTNSGISSASGGSTEPTTPDSERPAQALLRDYALNTDSAAGLLIRSIHLVTQRLNSQWRQDMSISLAALELLSGLAKVKVMVDSGDRKRAISSVCTYIVYQCSRPAPLHSRDLHSMIVAAFQCLCVWLTEHPDMLDEKDCLKEVLEIVELGISGSKSKNNEQEVKYKGDKEPNPASMRVKDAAEATLTCIMQLLGAFPSPSGPASPCSLVNETTLIKYSRLPTINKHSFRYFVLDNSVILAMLEQPLGNEQNDFFPSVTVLVRGMSGRLAWAQQLCLLPRGAKANQKLFVPEPRPVPKNDVGFKYSVKHRPFPEEVDKIPFVKADLSIPDLHEIVTEELEERHEKLRSGMAQQIAYEIHLEQQSEEELQKRSFPDPVTDCKPPPPAQEFQTARLFLSHFGFLSLEALKEPANSRLPPHLIALDSTIPGFFDDIGYLDLLPCRPFDTVFIFYMKPGQKTNQEILKNVESSRTVQPHFLEFLLSLGWSVDVGRHPGWTGHVSTSWSINCCDDGEGSQQEVISSEDIGASIFNGQKKVLYYADALTEIAFVVPSPVESLTDSLESNISDQDSDSNMDLMPGILKQPSLTLELFPNHTDNLNSSQRLSPSSRMRKLPQGRPVPPLGPETRVSVVWVERYDDIENFPLSELMTEISTGVETTANSSTSLRSTTLEKEVPVIFIHPLNTGLFRIKIQGATGKFNMVIPLVDGMIVSRRALGFLVRQTVINICRRKRLESDSYSPPHVRRKQKITDIVNKYRNKQLEPEFYTSLFQEVGLKNCSS.

Disordered stretches follow at residues 355 to 437 (PRSD…APRR) and 709 to 738 (ENNLKSHSRTNSGISSASGGSTEPTTPDSE). Ser359 is modified (phosphoserine). Phosphothreonine occurs at positions 363 and 379. 3 stretches are compositionally biased toward polar residues: residues 369–381 (SMPQSAAVSTTPP), 392–428 (NKATMKTSTVSTAHASKVQHQTSSTSPLSSPNQTSSE), and 711–735 (NLKSHSRTNSGISSASGGSTEPTTP). 2 positions are modified to phosphoserine: Ser421 and Ser720. Thr734 is modified (phosphothreonine). The 244-residue stretch at 1149–1392 (IGYLDLLPCR…TTLEKEVPVI (244 aa)) folds into the Rap-GAP domain. The residue at position 1285 (Ser1285) is a Phosphoserine. The segment covering 1312 to 1323 (NLNSSQRLSPSS) has biased composition (polar residues). The tract at residues 1312 to 1335 (NLNSSQRLSPSSRMRKLPQGRPVP) is disordered.

In terms of assembly, component of the heterodimeric RalGAP1 complex with RALGAPA1 and of the heterodimeric RalGAP2 complex with RALGAPA2. Heterodimerization is required for activity. Highly expressed in brain, mostly in amygdala.

Non-catalytic subunit of the heterodimeric RalGAP1 and RalGAP2 complexes which act as GTPase activators for the Ras-like small GTPases RALA and RALB. In Homo sapiens (Human), this protein is Ral GTPase-activating protein subunit beta (RALGAPB).